The primary structure comprises 657 residues: Zinc finger protein 630 (657 aa).

Residues 8–79 enclose the KRAB domain; it reads VTFEDVAVDF…ESELSRWIYP (72 aa). 2 C2H2-type zinc fingers span residues 263 to 285 and 291 to 313; these read NVCS…QRIH and YVCG…QRIH. The C2H2-type 3; degenerate zinc-finger motif lies at 319-341; the sequence is YECTKYGRAFSRKSPFTVHQRVH. 9 consecutive C2H2-type zinc fingers follow at residues 347-369, 375-397, 403-425, 431-453, 459-481, 487-509, 515-537, 543-565, and 571-593; these read YECF…QRVH, FECS…QITH, YECT…QRTH, YKCG…QRIH, YVCT…QRLH, YMCT…QRIH, YQCG…LRVH, YECT…QRGH, and YECS…QKTH. The segment at 599–621 adopts a C2H2-type 13; degenerate zinc-finger fold; sequence PECAESGMTFFWKSQMITYQRRH. A C2H2-type 14; degenerate zinc finger spans residues 627-649; that stretch reads SRCSDCGKAFCQHVYFTGHQNPY.

Belongs to the krueppel C2H2-type zinc-finger protein family.

Its subcellular location is the nucleus. May be involved in transcriptional regulation. This Homo sapiens (Human) protein is Zinc finger protein 630 (ZNF630).